Reading from the N-terminus, the 115-residue chain is MDHLVKIIEKKYEKKEIPDFRPGDTVRVHVKVIEGDRERTQVFEGIVIAKRGSGINKTFTVRRIGSHGVGVERIFPVHSPVVEKIEVVRKGKVRRAKLYYLRNVRGKIRIKERRD.

This sequence belongs to the bacterial ribosomal protein bL19 family.

In terms of biological role, this protein is located at the 30S-50S ribosomal subunit interface and may play a role in the structure and function of the aminoacyl-tRNA binding site. In Thermotoga maritima (strain ATCC 43589 / DSM 3109 / JCM 10099 / NBRC 100826 / MSB8), this protein is Large ribosomal subunit protein bL19 (rplS).